The chain runs to 1229 residues: DNA-directed RNA polymerase subunit beta (1229 aa).

This sequence belongs to the RNA polymerase beta chain family. The RNAP catalytic core consists of 2 alpha, 1 beta, 1 beta' and 1 omega subunit. When a sigma factor is associated with the core the holoenzyme is formed, which can initiate transcription.

It catalyses the reaction RNA(n) + a ribonucleoside 5'-triphosphate = RNA(n+1) + diphosphate. Its function is as follows. DNA-dependent RNA polymerase catalyzes the transcription of DNA into RNA using the four ribonucleoside triphosphates as substrates. In Roseiflexus sp. (strain RS-1), this protein is DNA-directed RNA polymerase subunit beta.